The primary structure comprises 260 residues: Na(+)-translocating NADH-quinone reductase subunit C (260 aa).

A helical transmembrane segment spans residues 12 to 32 (LLVIILLSLACSIIVAGSAVL). Position 226 is an FMN phosphoryl threonine (Thr-226).

Belongs to the NqrC family. In terms of assembly, composed of six subunits; NqrA, NqrB, NqrC, NqrD, NqrE and NqrF. Requires FMN as cofactor.

Its subcellular location is the cell inner membrane. It catalyses the reaction a ubiquinone + n Na(+)(in) + NADH + H(+) = a ubiquinol + n Na(+)(out) + NAD(+). Functionally, NQR complex catalyzes the reduction of ubiquinone-1 to ubiquinol by two successive reactions, coupled with the transport of Na(+) ions from the cytoplasm to the periplasm. NqrA to NqrE are probably involved in the second step, the conversion of ubisemiquinone to ubiquinol. The chain is Na(+)-translocating NADH-quinone reductase subunit C from Pasteurella multocida (strain Pm70).